Consider the following 557-residue polypeptide: Putative UDP-glucuronate:xylan alpha-glucuronosyltransferase 4 (557 aa).

A helical; Signal-anchor for type II membrane protein transmembrane segment spans residues 11-31 (KIFMIYLILVSLSLLGLILPF). Mn(2+) is bound by residues aspartate 365 and aspartate 367. Residues 365-367 (DAD), 394-396 (NSG), 421-425 (NGGDQ), and 466-471 (HYLGLK) contribute to the substrate site. Histidine 466 lines the Mn(2+) pocket.

The protein belongs to the glycosyltransferase 8 family. Glycogenin subfamily. Requires Mn(2+) as cofactor.

The protein localises to the golgi apparatus membrane. Its function is as follows. May be involved in the substitutions of the xylan backbone in stem glucuronoxylan. This Arabidopsis thaliana (Mouse-ear cress) protein is Putative UDP-glucuronate:xylan alpha-glucuronosyltransferase 4 (GUX4).